Consider the following 330-residue polypeptide: Short chain dehydrogenase yanD (330 aa).

Residues Lys-57, Asp-86, Asn-113, Tyr-204, and Lys-208 each contribute to the NADP(+) site. The active-site Proton donor is the Tyr-204. The active-site Lowers pKa of active site Tyr is Lys-208.

Belongs to the short-chain dehydrogenases/reductases (SDR) family.

It functions in the pathway secondary metabolite biosynthesis; terpenoid biosynthesis. Functionally, short chain dehydrogenase; part of the gene cluster that mediates the biosynthesis of yanuthone D, a fungal isoprenoid epoxycyclohexenone that acts as an antibiotic against fungi and bacteria. The first step of the pathway is the synthesis of 6-methylsalicylic acid (6-MSA) by the polyketide synthase yanA. 6-MSA is then converted to m-cresol by the decarboxylase yanB. The cytochrome P450 monooxygenase yanC then catalyzes the oxidation of m-cresol to toluquinol. Epoxidation of toluquinol is then performed by the short chain dehydrogenase yanD, with the help of yanE, and a further prenylation by yanG leads to 7-deacetoxyyanuthone A. The next step is the hydroxylation of C-22 of 7-deacetoxyyanuthone A by the cytochrome P450 monooxygenase yanH to yield 22-deacetylyanuthone A. O-Mevalon transferase yanI then attaches mevalon to the hydroxyl group of 22-deacetylyanuthone A to produce yanuthone E. Finally, the FAD-dependent monooxygenase yanF oxidizes the hydroxyl group at C15 of yanuthone E to form yanuthone D. Furthermore, several branching points in the pathway lead to the production of yanuthones F and G from 7-deacetoxyyanuthone A; yanuthones H and I from 22-deacetylyanuthone A; and yanuthone J from yanuthone E. YanD is also involved in the synthesis of yanuthone X1 which does not have 6-methylsalicylic acid (6-MSA) as precursor. This is Short chain dehydrogenase yanD from Aspergillus niger (strain ATCC 1015 / CBS 113.46 / FGSC A1144 / LSHB Ac4 / NCTC 3858a / NRRL 328 / USDA 3528.7).